A 208-amino-acid polypeptide reads, in one-letter code: Uracil phosphoribosyltransferase (208 aa).

5-phospho-alpha-D-ribose 1-diphosphate contacts are provided by residues Arg-78, Arg-103, and 130–138; that span reads DPMLATGGS. Residues Ile-193 and 198–200 each bind uracil; that span reads GDA. Asp-199 is a binding site for 5-phospho-alpha-D-ribose 1-diphosphate.

It belongs to the UPRTase family. The cofactor is Mg(2+).

The catalysed reaction is UMP + diphosphate = 5-phospho-alpha-D-ribose 1-diphosphate + uracil. It functions in the pathway pyrimidine metabolism; UMP biosynthesis via salvage pathway; UMP from uracil: step 1/1. Its activity is regulated as follows. Allosterically activated by GTP. Its function is as follows. Catalyzes the conversion of uracil and 5-phospho-alpha-D-ribose 1-diphosphate (PRPP) to UMP and diphosphate. This Pasteurella multocida (strain Pm70) protein is Uracil phosphoribosyltransferase.